The chain runs to 187 residues: 5-formyltetrahydrofolate cyclo-ligase (187 aa).

ATP contacts are provided by residues 6–10 (RQQIR), 139–146 (GMGGGFYD), and D178.

This sequence belongs to the 5-formyltetrahydrofolate cyclo-ligase family.

It carries out the reaction (6S)-5-formyl-5,6,7,8-tetrahydrofolate + ATP = (6R)-5,10-methenyltetrahydrofolate + ADP + phosphate. The protein operates within one-carbon metabolism; tetrahydrofolate interconversion. Involved in the removal of 5-formyltetrahydrofolate. In vitro, it is a potent inhibitor of various folate-dependent enzymes in the C1 metabolism network and in vivo it might function as a folate storage. 5-formyltetrahydrofolate is also used as an antifolate rescue agent in cancer chemotherapy. Catalyzes the irreversible ATP-dependent transformation of 5-formyltetrahydrofolate (5-CHO-THF) to form 5,10-methenyltetrahydrofolate (5,10-CH=THF). The reverse reaction is catalyzed by the serine hydroxymethyltransferase GlyA (SHMT). The polypeptide is 5-formyltetrahydrofolate cyclo-ligase (Haemophilus influenzae (strain ATCC 51907 / DSM 11121 / KW20 / Rd)).